A 430-amino-acid chain; its full sequence is Glycine reductase complex component B subunits alpha and beta (430 aa).

C242 acts as the Schiff-base intermediate with substrate; via pyruvic acid in catalysis. C242 carries the post-translational modification Pyruvic acid (Cys).

As to quaternary structure, heterohexamer of two alpha, two beta and two gamma subunits. Component of the glycine reductase complex, together with components A and C. PB is substrate specific. In terms of processing, the peptide chain is cleaved into beta and alpha chains, and the alpha chain N-terminal cysteine is deaminated and oxidized to form a reactive pyruvoyl group.

It carries out the reaction acetyl phosphate + [thioredoxin]-disulfide + NH4(+) + H2O = [thioredoxin]-dithiol + glycine + phosphate + H(+). In terms of biological role, in the first step of glycine reductase, the substrate is bound to component PB via a Schiff base intermediate. Then the PB-activated substrate is nucleophilically attacked by the selenol anion of component PA to transform it to a carboxymethylated selenoether and the respective amine. By action of component PC, acetyl phosphate is formed, leaving component PA in its oxidized state. Finally component PA becomes reduced by the thioredoxin system to start a new catalytic cycle of reductive deamination. This chain is Glycine reductase complex component B subunits alpha and beta (grdE), found in Acetoanaerobium sticklandii (strain ATCC 12662 / DSM 519 / JCM 1433 / CCUG 9281 / NCIMB 10654 / HF) (Clostridium sticklandii).